A 1598-amino-acid chain; its full sequence is Fatty acid synthase subunit alpha (1598 aa).

The disordered stretch occupies residues 96-134 (RTQPHKSSAPQEPVPKAAPKAAPPVPVATAPLPEPGRQV). A compositionally biased stretch (low complexity) spans 104–115 (APQEPVPKAAPK). The 79-residue stretch at 143 to 221 (DVPIQSRDVI…QIVSGSTSTT (79 aa)) folds into the Carrier domain. Ser-181 is subject to O-(pantetheine 4'-phosphoryl)serine. A ketoreductase (KR) domain region spans residues 543 to 784 (LKGKTVLLTG…LAALLVNPFA (242 aa)). Residues 818-844 (KQDSTSTPTHQHLPSHHHVDEPEIGKP) are disordered. The segment covering 820 to 829 (DSTSTPTHQH) has biased composition (polar residues). The 533-residue stretch at 992 to 1524 (HEIVLTRDLA…QKGAQAIIVH (533 aa)) folds into the Ketosynthase family 3 (KS3) domain. Cys-1175 (for beta-ketoacyl synthase activity) is an active-site residue. The segment at 1280 to 1301 (ASDKTGRSVPSPGKGTLTNARE) is disordered. Catalysis depends on for beta-ketoacyl synthase activity residues His-1409 and His-1450.

Belongs to the thiolase-like superfamily. Fungal fatty acid synthetase subunit alpha family. As to quaternary structure, fatty acid synthase is composed of alpha and beta subunits.

The catalysed reaction is acetyl-CoA + n malonyl-CoA + 2n NADPH + 4n H(+) = a long-chain-acyl-CoA + n CoA + n CO2 + 2n NADP(+).. It carries out the reaction a fatty acyl-[ACP] + malonyl-[ACP] + H(+) = a 3-oxoacyl-[ACP] + holo-[ACP] + CO2. It catalyses the reaction a (3R)-hydroxyacyl-[ACP] + NADP(+) = a 3-oxoacyl-[ACP] + NADPH + H(+). It participates in mycotoxin biosynthesis. In terms of biological role, fatty acid synthase subunit alpha; part of the gene cluster that mediates the biosynthesis of gramillins A and B, bicyclic lipopeptides that induce cell death in maize leaves but not in wheat leaves. The nonribosomal peptide synthetase GRA1 incorporates respectively a glutamic adic (Glu), a leucine (Leu), a serine (Ser), a hydroxyglutamine (HOGln), a 2-amino decanoic acid, and 2 cysteins (CysB and CysA). The biosynthesis of 2-amino decanoic acid incorporated in gramillins could be initiated by a fatty acid synthase composed of the alpha and beta subunits FGSG_00036 and FGSG_11656. The cytochrome P450 monooxygenase FGSG_15680 could hydroxylate the fatty acid chain. Subsequent oxidation to the ketone by the oxidoreductase FGSG_00048 and transamination by aminotransferase FGSG_00049 could form 2-amino-decanoic acid. On the other hand, FGSG_15680 could also be responsible for the HO-modified glutamine at the gamma-position. Whether hydroxylation occurs on the fully assembled product or on the Gln residue prior to assembly into the gramillins requires further proof. The thioredoxin FGSG_00043 could also be required for the disulfide-bond formation between CysA and CysB. The specific involvement of the remaining proteins from the cluster is more difficult to discern, but could have broader regulatory (FGSG_00040 and FGSG_11657) or enzymatic functions (FGSG_00044 and FGSG_00045). The final C-domain of GRA1 does not possess the expected sequence of a termination CT domain, often implicated in macrocyclization and release of a cyclopeptidein fungal NRPs; and the thioesterase FGSG_00047 may act in concert with the terminal C-domain of GRA1 to catalyze the formation of the macrocyclic anhydride and release of the products. The protein is Fatty acid synthase subunit alpha of Gibberella zeae (strain ATCC MYA-4620 / CBS 123657 / FGSC 9075 / NRRL 31084 / PH-1) (Wheat head blight fungus).